The following is a 515-amino-acid chain: Galactose-1-phosphate uridylyltransferase (515 aa).

The protein belongs to the galactose-1-phosphate uridylyltransferase type 2 family.

The protein localises to the cytoplasm. It carries out the reaction alpha-D-galactose 1-phosphate + UDP-alpha-D-glucose = alpha-D-glucose 1-phosphate + UDP-alpha-D-galactose. It functions in the pathway carbohydrate metabolism; galactose metabolism. Transfers the UMP unit from UDP-glucose (UDP-Glc) to Gal1P. Can also transfer the UMP unit to GlcNAc1P and GalNAc1P. Involved in the general galactose metabolism, and also involved in the lacto-N-biose I/galacto-N-biose (LNB/GNB) degradation pathway, which is important for host intestinal colonization by bifidobacteria. The protein is Galactose-1-phosphate uridylyltransferase of Bifidobacterium longum subsp. longum (strain ATCC 15707 / DSM 20219 / JCM 1217 / NCTC 11818 / E194b).